The primary structure comprises 274 residues: Penicillin-insensitive murein endopeptidase (274 aa).

The N-terminal stretch at 1–19 (MNKTAIALLALLASSASLA) is a signal peptide. 3 disulfides stabilise this stretch: Cys44–Cys265, Cys187–Cys235, and Cys216–Cys223. Positions 110, 113, 120, 147, 150, and 211 each coordinate Zn(2+). Positions 227-274 (PLPPPGDGCGAELQSWFEPPKPGTTKPEKKTPPPLPPSCQALLDEHVI) are disordered.

This sequence belongs to the peptidase M74 family. Dimer. Requires Zn(2+) as cofactor.

It is found in the periplasm. In terms of biological role, murein endopeptidase that cleaves the D-alanyl-meso-2,6-diamino-pimelyl amide bond that connects peptidoglycan strands. Likely plays a role in the removal of murein from the sacculus. This is Penicillin-insensitive murein endopeptidase from Escherichia coli O17:K52:H18 (strain UMN026 / ExPEC).